A 784-amino-acid polypeptide reads, in one-letter code: MYPSTLPAEADPSTMNGSSVAEPPDFQAATAAAAAAARASSLEQDEWSVGECGFLDPDVQRTMRSGSAAEDITQYPMHGWVDVTKEFHDACAELQPGELAQDMLFGLFEAMSAIEIMDPKMDVGMGFDKQDLPPPSFEAAIATGAIKLDDLTPSELIGIYDALFSCLVSWLEGNSMDQVLFTCLYLHAPAQIKDKALRVFCTAVRNLIVVIKKIIAVAAVNEEEDFQLYGNSALLAAEKAQPATVYSSLKDVEDELIRKCKKLTSTEDWMAVVHRLRFMRHLFQVIYHVEQMASNDTVDDKVDIYKILLVASEMLPGIRNTLDRGTQPEKGSDAPNPMGFSPRIHDRSQPPAFPRSIKIRDRPSSYQFLEEMISRFKYACKVTKYKDYYSALNFFIEYSKKSGQCILSRSVLQTLFSANMRMAHGKLPMKQFLRHSVQVFNSPPVLNAKHPVAADPKVQQHLENFFRYCINMNTFTQFIRICGFNRARQRDKLARLIENFDTIQVDAARLDSMMNQLANERAMEGNEPMATALKHSTHFSTWVLYNCFRAMLIFLMSGFELELYAVHEFLYIYWYPYEFLIGFLVSALTRTENILLAQEEYAEHQSKTQSGGSGAAKNRKAAKPKKNKKTQRPYRAEIVFYHALLSLCGGMYKAMGALTKDGRVRLPLSKFDNEEIRYNRRFLPFATLTSPPPVSYAEFKNVREHMMRHSVEDLYTYAAKHFDQARNVLESIQNPDQEMLDLLQIARTNFVVMNVLARGHQKEVKRQPEFDFSKHSYFPIIKLK.

Disordered stretches follow at residues 1 to 23, 320 to 353, and 606 to 630; these read MYPS…VAEP, NTLD…PPAF, and SKTQ…NKKT. The segment covering 617–630 has biased composition (basic residues); it reads KNRKAAKPKKNKKT.

It belongs to the MAK10 family. As to quaternary structure, component of the N-terminal acetyltransferase C (NatC) complex, which is composed of Naa35, Sbat/Naa38 and Naa30A.

It is found in the cytoplasm. Its function is as follows. Auxillary component of the N-terminal acetyltransferase C (NatC) complex which catalyzes acetylation of N-terminal methionine residues. In Drosophila melanogaster (Fruit fly), this protein is N-alpha-acetyltransferase 35, NatC auxiliary subunit homolog.